The sequence spans 154 residues: Endoribonuclease YbeY (154 aa).

Zn(2+) is bound by residues H116, H120, and H126.

This sequence belongs to the endoribonuclease YbeY family. It depends on Zn(2+) as a cofactor.

It is found in the cytoplasm. Functionally, single strand-specific metallo-endoribonuclease involved in late-stage 70S ribosome quality control and in maturation of the 3' terminus of the 16S rRNA. This is Endoribonuclease YbeY from Buchnera aphidicola subsp. Baizongia pistaciae (strain Bp).